The following is a 200-amino-acid chain: 3-isopropylmalate dehydratase small subunit (200 aa).

The protein belongs to the LeuD family. LeuD type 1 subfamily. As to quaternary structure, heterodimer of LeuC and LeuD.

It carries out the reaction (2R,3S)-3-isopropylmalate = (2S)-2-isopropylmalate. The protein operates within amino-acid biosynthesis; L-leucine biosynthesis; L-leucine from 3-methyl-2-oxobutanoate: step 2/4. In terms of biological role, catalyzes the isomerization between 2-isopropylmalate and 3-isopropylmalate, via the formation of 2-isopropylmaleate. The polypeptide is 3-isopropylmalate dehydratase small subunit (Pectobacterium atrosepticum (strain SCRI 1043 / ATCC BAA-672) (Erwinia carotovora subsp. atroseptica)).